Here is a 110-residue protein sequence, read N- to C-terminus: ATP synthase subunit c (110 aa).

3 helical membrane-spanning segments follow: residues 4-24 (FFVI…VFAA), 37-57 (ATAG…AGMG), and 81-101 (FIVG…FVLI).

Belongs to the ATPase C chain family. As to quaternary structure, F-type ATPases have 2 components, F(1) - the catalytic core - and F(0) - the membrane proton channel. F(1) has five subunits: alpha(3), beta(3), gamma(1), delta(1), epsilon(1). F(0) has three main subunits: a(1), b(2) and c(10-14). The alpha and beta chains form an alternating ring which encloses part of the gamma chain. F(1) is attached to F(0) by a central stalk formed by the gamma and epsilon chains, while a peripheral stalk is formed by the delta and b chains.

It localises to the cell inner membrane. F(1)F(0) ATP synthase produces ATP from ADP in the presence of a proton or sodium gradient. F-type ATPases consist of two structural domains, F(1) containing the extramembraneous catalytic core and F(0) containing the membrane proton channel, linked together by a central stalk and a peripheral stalk. During catalysis, ATP synthesis in the catalytic domain of F(1) is coupled via a rotary mechanism of the central stalk subunits to proton translocation. In terms of biological role, key component of the F(0) channel; it plays a direct role in translocation across the membrane. A homomeric c-ring of between 10-14 subunits forms the central stalk rotor element with the F(1) delta and epsilon subunits. The polypeptide is ATP synthase subunit c (Thermodesulfovibrio yellowstonii (strain ATCC 51303 / DSM 11347 / YP87)).